Consider the following 885-residue polypeptide: Translation initiation factor IF-2 (885 aa).

Disordered regions lie at residues 55-150 (IPDK…ADVT) and 269-300 (NTIN…EAVT). Basic and acidic residues predominate over residues 65–146 (EPKAKKEPKK…AEAPKPKESL (82 aa)). Positions 281 to 290 (RRARKKHKKP) are enriched in basic residues. Positions 384–553 (PRAPVITIMG…LLQADLLELK (170 aa)) constitute a tr-type G domain. A G1 region spans residues 393 to 400 (GHVDHGKT). Residue 393–400 (GHVDHGKT) participates in GTP binding. Residues 418–422 (GITQH) are G2. Positions 439–442 (DTPG) are G3. GTP contacts are provided by residues 439–443 (DTPGH) and 493–496 (NKMD). Residues 493–496 (NKMD) form a G4 region. A G5 region spans residues 529–531 (SAK).

Belongs to the TRAFAC class translation factor GTPase superfamily. Classic translation factor GTPase family. IF-2 subfamily.

It localises to the cytoplasm. Functionally, one of the essential components for the initiation of protein synthesis. Protects formylmethionyl-tRNA from spontaneous hydrolysis and promotes its binding to the 30S ribosomal subunits. Also involved in the hydrolysis of GTP during the formation of the 70S ribosomal complex. The sequence is that of Translation initiation factor IF-2 from Campylobacter concisus (strain 13826).